A 179-amino-acid chain; its full sequence is MINNNKWLVVGLITSCHGINGQLKVKSLSDFEERFLKPGIRWLQKENEPPSKIELTSGFKQPGKETFIIKLQGINNRNQAERLKKCKILVKTNKLPKLKKEEFHLLELINLEVKTLENEELKIIGKVINLENEKNNLLVVELFKNKKKVLIPFVKEIVPLVDIKNNFLIINPPNGLLDL.

In terms of domain architecture, PRC barrel spans 100 to 176; sequence KEEFHLLELI…FLIINPPNGL (77 aa).

The protein belongs to the RimM family. As to quaternary structure, binds ribosomal protein uS19.

It is found in the cytoplasm. In terms of biological role, an accessory protein needed during the final step in the assembly of 30S ribosomal subunit, possibly for assembly of the head region. Essential for efficient processing of 16S rRNA. May be needed both before and after RbfA during the maturation of 16S rRNA. It has affinity for free ribosomal 30S subunits but not for 70S ribosomes. The protein is Ribosome maturation factor RimM of Prochlorococcus marinus (strain MIT 9312).